A 319-amino-acid polypeptide reads, in one-letter code: Malate dehydrogenase (319 aa).

Residues 10 to 15 (GAGNIG) and D34 each bind NAD(+). 2 residues coordinate substrate: R83 and R89. Residues N96 and 119–121 (ITN) each bind NAD(+). Substrate is bound by residues N121 and R152. H176 acts as the Proton acceptor in catalysis.

This sequence belongs to the LDH/MDH superfamily. MDH type 3 family.

The catalysed reaction is (S)-malate + NAD(+) = oxaloacetate + NADH + H(+). Its function is as follows. Catalyzes the reversible oxidation of malate to oxaloacetate. In Francisella novicida, this protein is Malate dehydrogenase.